Here is a 101-residue protein sequence, read N- to C-terminus: NAD(P)H-quinone oxidoreductase subunit 4L, chloroplastic (101 aa).

Helical transmembrane passes span 2–22 (MTEH…YGLI), 32–52 (MCLE…SDLF), and 61–81 (IFSI…PAIV).

Belongs to the complex I subunit 4L family. In terms of assembly, NDH is composed of at least 16 different subunits, 5 of which are encoded in the nucleus.

The protein resides in the plastid. It is found in the chloroplast thylakoid membrane. The enzyme catalyses a plastoquinone + NADH + (n+1) H(+)(in) = a plastoquinol + NAD(+) + n H(+)(out). It catalyses the reaction a plastoquinone + NADPH + (n+1) H(+)(in) = a plastoquinol + NADP(+) + n H(+)(out). Functionally, NDH shuttles electrons from NAD(P)H:plastoquinone, via FMN and iron-sulfur (Fe-S) centers, to quinones in the photosynthetic chain and possibly in a chloroplast respiratory chain. The immediate electron acceptor for the enzyme in this species is believed to be plastoquinone. Couples the redox reaction to proton translocation, and thus conserves the redox energy in a proton gradient. This chain is NAD(P)H-quinone oxidoreductase subunit 4L, chloroplastic, found in Liriodendron tulipifera (Tuliptree).